A 287-amino-acid polypeptide reads, in one-letter code: Fructose-bisphosphate aldolase (287 aa).

Residue serine 50 participates in D-glyceraldehyde 3-phosphate binding. The Proton donor role is filled by aspartate 85. The Zn(2+) site is built by histidine 86, aspartate 107, glutamate 137, and histidine 181. Dihydroxyacetone phosphate is bound at residue glycine 182. Residue histidine 209 coordinates Zn(2+). Dihydroxyacetone phosphate is bound by residues 210–212 (GGT) and 231–234 (NVNT). Phosphothreonine is present on residues threonine 212 and threonine 234.

It belongs to the class II fructose-bisphosphate aldolase family. The cofactor is Zn(2+).

It catalyses the reaction beta-D-fructose 1,6-bisphosphate = D-glyceraldehyde 3-phosphate + dihydroxyacetone phosphate. The protein operates within carbohydrate degradation; glycolysis; D-glyceraldehyde 3-phosphate and glycerone phosphate from D-glucose: step 4/4. Catalyzes the aldol condensation of dihydroxyacetone phosphate (DHAP or glycerone-phosphate) with glyceraldehyde 3-phosphate (G3P) to form fructose 1,6-bisphosphate (FBP) in gluconeogenesis and the reverse reaction in glycolysis. The polypeptide is Fructose-bisphosphate aldolase (fba) (Geobacillus stearothermophilus (Bacillus stearothermophilus)).